Consider the following 1470-residue polypeptide: Calmodulin-regulated spectrin-associated protein 2 (1470 aa).

One can recognise a Calponin-homology (CH) domain in the interval 222–335; sequence WKLVPARYRK…FMAELFWWFE (114 aa). The disordered stretch occupies residues 374 to 397; it reads SSSSSDFTSRYTRPQTHSSVSGGI. The span at 380 to 390 shows a compositional bias: polar residues; that stretch reads FTSRYTRPQTH. Phosphoserine occurs at positions 402 and 404. Residue Thr412 is modified to Phosphothreonine. Residues Ser450, Ser581, Ser582, Ser594, and Ser656 each carry the phosphoserine modification. 2 disordered regions span residues 580-622 and 648-712; these read QSSP…EDSS and ASNP…EGSE. Thr661 carries the phosphothreonine modification. Ser663 is modified (phosphoserine). Residues 663–682 show a composition bias toward low complexity; sequence STKSQPGSSASSSSGVKMTS. Over residues 686-696 the composition is skewed to basic and acidic residues; it reads QKFRKLNHTDG. Residues 739-776 are a coiled coil; sequence LLASEMVHLRMRLEEKRRAIEAQKKKMEAAFTKQRQKM. Positions 796–835 are enriched in basic and acidic residues; the sequence is REEAAGAEDEKVYTDRAKEKESQKMDGQRSKSLADIKESM. A disordered region spans residues 796–864; sequence REEAAGAEDE…QWNLTSPSEE (69 aa). Ser845 carries the phosphoserine modification. Residues 870 to 909 adopt a coiled-coil conformation; that stretch reads ELLEYTKSIEKLNSSLHFLQQEMQRLSLQQEMLMQMREQQ. The segment at 905 to 1016 is MBD region; it reads MREQQSWVIS…IQTRSFVCFG (112 aa). Phosphoserine occurs at positions 914 and 919. 2 disordered regions span residues 930 to 1059 and 1078 to 1099; these read RQAG…PLES and NEDQ…PTAP. Residues 935 to 946 show a composition bias toward low complexity; sequence SSAAAPFSADSP. The segment covering 952-971 has biased composition (polar residues); the sequence is SPQSSTRKSASFSVKNQRTP. Thr979, Thr984, and Thr986 each carry phosphothreonine. Phosphoserine occurs at positions 990 and 1001. The span at 1001–1011 shows a compositional bias: polar residues; sequence SPSQVPIQTRS. Basic and acidic residues-rich tracts occupy residues 1020–1037 and 1044–1056; these read EPQK…EPSE and SCDH…EVKP. Residues 1086 to 1098 show a composition bias toward pro residues; the sequence is TDPPPKPVFPPTA. A Phosphoserine modification is found at Ser1129. A coiled-coil region spans residues 1147–1219; it reads KDDQKAENDM…REFIRQEYMR (73 aa). Basic and acidic residues predominate over residues 1167 to 1233; it reads RLRREKETQL…KLMEDMDTVI (67 aa). The disordered stretch occupies residues 1167–1327; it reads RLRREKETQL…TTSSVASGTE (161 aa). The segment covering 1268-1280 has biased composition (polar residues); that stretch reads SSLSLASLNTGDT. Phosphoserine occurs at positions 1294, 1300, and 1302. Over residues 1315-1327 the composition is skewed to polar residues; that stretch reads NASTTSSVASGTE. In terms of domain architecture, CKK spans 1330 to 1464; the sequence is GPKLYKEPSA…QTKRPVTPKK (135 aa).

This sequence belongs to the CAMSAP1 family. In terms of assembly, interacts with CAMSAP3. Interacts with KATNA1 and KATNB1; leading to regulate the length of CAMSAP2-decorated microtubule stretches. Interacts with a complex formed by AKAP9 and PDE4DIP; this interaction, which is PDE4DIP isoform-specific, recruits CAMSAP2 to the Golgi. Interacts with MAPRE1/EB1. Present in the soma, axon, and dendritic shaft of hippocampal neurons (at protein level).

Its subcellular location is the cytoplasm. It localises to the cytoskeleton. The protein resides in the golgi apparatus. It is found in the cilium basal body. In terms of biological role, key microtubule-organizing protein that specifically binds the minus-end of non-centrosomal microtubules and regulates their dynamics and organization. Specifically recognizes growing microtubule minus-ends and autonomously decorates and stabilizes microtubule lattice formed by microtubule minus-end polymerization. Acts on free microtubule minus-ends that are not capped by microtubule-nucleating proteins or other factors and protects microtubule minus-ends from depolymerization. In addition, it also reduces the velocity of microtubule polymerization. Through the microtubule cytoskeleton, also regulates the organization of cellular organelles including the Golgi and the early endosomes. Essential for the tethering, but not for nucleation of non-centrosomal microtubules at the Golgi: together with Golgi-associated proteins AKAP9 and PDE4DIP, required to tether non-centrosomal minus-end microtubules to the Golgi, an important step for polarized cell movement. Also acts as a regulator of neuronal polarity and development: localizes to non-centrosomal microtubule minus-ends in neurons and stabilizes non-centrosomal microtubules, which is required for neuronal polarity, axon specification and dendritic branch formation. Through the microtubule cytoskeleton, regulates the autophagosome transport. The polypeptide is Calmodulin-regulated spectrin-associated protein 2 (Rattus norvegicus (Rat)).